Consider the following 457-residue polypeptide: Adenylosuccinate synthetase (457 aa).

Residues 40-46 (GDEGKGK) and 70-72 (GHT) contribute to the GTP site. The active-site Proton acceptor is the Asp-41. Mg(2+)-binding residues include Asp-41 and Gly-70. IMP-binding positions include 41-44 (DEGK), 68-71 (NAGH), Thr-161, Arg-175, Asn-255, Thr-270, and Arg-334. The Proton donor role is filled by His-71. 330 to 336 (VTTGRKR) contributes to the substrate binding site. GTP is bound by residues Arg-336, 362–364 (KLD), and 444–446 (GVG).

It belongs to the adenylosuccinate synthetase family. As to quaternary structure, homodimer. Mg(2+) serves as cofactor.

It is found in the cytoplasm. The enzyme catalyses IMP + L-aspartate + GTP = N(6)-(1,2-dicarboxyethyl)-AMP + GDP + phosphate + 2 H(+). The protein operates within purine metabolism; AMP biosynthesis via de novo pathway; AMP from IMP: step 1/2. Functionally, plays an important role in the de novo pathway and in the salvage pathway of purine nucleotide biosynthesis. Catalyzes the first committed step in the biosynthesis of AMP from IMP. The chain is Adenylosuccinate synthetase from Caenorhabditis elegans.